A 284-amino-acid chain; its full sequence is Signal peptidase I (284 aa).

A helical transmembrane segment spans residues 4 to 22; that stretch reads NFPLLLVIAVAVCGALALV. At 23-58 the chain is on the cytoplasmic side; that stretch reads DLVLFAPRRRAAISSYEGQVNEPDPAVLEKLNKEPL. Residues 59-77 traverse the membrane as a helical segment; sequence LVEYGKSFFPVLFIVLVLR. Over 78-284 the chain is Periplasmic; the sequence is SFLVEPFQIP…PNFSRVGVIH (207 aa). Catalysis depends on residues S90 and K145.

This sequence belongs to the peptidase S26 family.

It is found in the cell inner membrane. The enzyme catalyses Cleavage of hydrophobic, N-terminal signal or leader sequences from secreted and periplasmic proteins.. The protein is Signal peptidase I (lepB) of Pseudomonas aeruginosa (strain ATCC 15692 / DSM 22644 / CIP 104116 / JCM 14847 / LMG 12228 / 1C / PRS 101 / PAO1).